Consider the following 255-residue polypeptide: Probable UDP-N-acetylglucosamine pyrophosphorylase (255 aa).

The enzyme catalyses N-acetyl-alpha-D-glucosamine 1-phosphate + UTP + H(+) = UDP-N-acetyl-alpha-D-glucosamine + diphosphate. Its pathway is nucleotide-sugar biosynthesis; UDP-N-acetyl-alpha-D-glucosamine biosynthesis; UDP-N-acetyl-alpha-D-glucosamine from N-acetyl-alpha-D-glucosamine 1-phosphate: step 1/1. The protein is Probable UDP-N-acetylglucosamine pyrophosphorylase of Acanthamoeba polyphaga (Amoeba).